The following is a 776-amino-acid chain: Microtubule-associated protein tau (776 aa).

Positions 1–26 (MAEPRQEFDVMEDHAGTYGLGDRKDQ) are enriched in basic and acidic residues. The tract at residues 1–591 (MAEPRQEFDV…PVPMPDLKNV (591 aa)) is disordered. Ala2 carries the post-translational modification N-acetylalanine. A phosphotyrosine mark is found at Tyr18 and Tyr29. Lys44 is covalently cross-linked (Glycyl lysine isopeptide (Lys-Gly) (interchain with G-Cter in ubiquitin)). 2 positions are modified to phosphoserine: Ser46 and Ser61. The span at 61-71 (SETSDAKSTPT) shows a compositional bias: polar residues. Thr69, Thr71, and Thr111 each carry phosphothreonine. 2 stretches are compositionally biased toward basic and acidic residues: residues 179 to 189 (EGGRHAPELLK) and 207 to 216 (GGKERPGIKE). The segment covering 217-228 (EVDEDRDVDESS) has biased composition (acidic residues). Positions 314–323 (EQAHSEEHLG) are enriched in basic and acidic residues. Residues 325-340 (AAFPGAPGEGPEAQGP) show a composition bias toward low complexity. Composition is skewed to basic and acidic residues over residues 344–356 (EDTK…EPSE) and 381–393 (KSKD…DKKA). Positions 442–453 (VSSVTXRTGSSG) are enriched in low complexity. The span at 455–466 (KEMKLKGADGKT) shows a compositional bias: basic and acidic residues. A Phosphothreonine modification is found at Thr470. Arg472 bears the Omega-N-methylarginine mark. Lys480 bears the N6,N6-dimethyllysine; alternate mark. At Lys480 the chain carries N6-acetyllysine; alternate. A phosphothreonine mark is found at Thr486, Thr492, and Thr498. 3 positions are modified to phosphoserine: Ser502, Ser526, and Ser530. A compositionally biased stretch (basic and acidic residues) spans 517 to 528 (KSERGEPPKSGD). Positions 529 to 549 (RSGYSSPGSPGTPGSRSRTPS) are enriched in low complexity. The residue at position 532 (Tyr532) is a Phosphotyrosine. Phosphoserine occurs at positions 533, 534, and 537. A phosphothreonine mark is found at Thr540 and Thr547. The residue at position 549 (Ser549) is a Phosphoserine. Phosphothreonine is present on Thr552. The residue at position 560 (Lys560) is an N6-acetyllysine. Phosphothreonine is present on Thr566. Residues Ser570 and Ser572 each carry the phosphoserine modification. Tau/MAP repeat units lie at residues 579 to 609 (QTAP…GGGK), 610 to 640 (VQII…GGGS), 641 to 671 (VQIV…GGGQ), and 672 to 703 (VEVK…GGGN). Residue Lys589 forms a Glycyl lysine isopeptide (Lys-Gly) (interchain with G-Cter in ubiquitin) linkage. Lys594 is subject to N6-acetyllysine; alternate. Lys594 carries the N6-methyllysine; alternate modification. Lys594 participates in a covalent cross-link: Glycyl lysine isopeptide (Lys-Gly) (interchain with G-Cter in ubiquitin); alternate. Ser597 is subject to Phosphoserine. Residue Lys602 forms a Glycyl lysine isopeptide (Lys-Gly) (interchain with G-Cter in ubiquitin) linkage. Lys616 is modified (N6-acetyllysine; alternate). Lys616 participates in a covalent cross-link: Glycyl lysine isopeptide (Lys-Gly) (interchain with G-Cter in ubiquitin); alternate. Phosphoserine occurs at positions 620 and 624. Residue Lys625 is modified to N6-acetyllysine. Residue Ser628 is modified to Phosphoserine. Lys633 carries the N6-acetyllysine; alternate modification. A Glycyl lysine isopeptide (Lys-Gly) (interchain with G-Cter in ubiquitin); alternate cross-link involves residue Lys633. Ser640 is subject to Phosphoserine. The residue at position 646 (Lys646) is an N6,N6-dimethyllysine; alternate. Lys646, Lys652, and Lys656 each carry N6-acetyllysine; alternate. Glycyl lysine isopeptide (Lys-Gly) (interchain with G-Cter in ubiquitin); alternate cross-links involve residues Lys646, Lys652, and Lys656. Ser659 is modified (phosphoserine). Lys666, Lys678, and Lys682 each carry N6-acetyllysine; alternate. Residues Lys666, Lys678, and Lys682 each participate in a glycyl lysine isopeptide (Lys-Gly) (interchain with G-Cter in ubiquitin); alternate cross-link. Arg684 carries the post-translational modification Omega-N-methylarginine. Residue Ser687 is modified to Phosphoserine. Residue Lys688 forms a Glycyl lysine isopeptide (Lys-Gly) (interchain with G-Cter in ubiquitin) linkage. At Ser691 the chain carries Phosphoserine. N6-acetyllysine; alternate is present on Lys704. Residue Lys704 forms a Glycyl lysine isopeptide (Lys-Gly) (interchain with G-Cter in ubiquitin); alternate linkage. A Glycyl lysine isopeptide (Lys-Gly) (interchain with G-Cter in ubiquitin) cross-link involves residue Lys710. Lys720 is modified (N6-acetyllysine; alternate). Lys720 is covalently cross-linked (Glycyl lysine isopeptide (Lys-Gly) (interchain with G-Cter in ubiquitin); alternate). At Tyr729 the chain carries Phosphotyrosine. 2 positions are modified to phosphoserine: Ser731 and Ser735. A disordered region spans residues 733–752 (VVSGDTSPRHLSNVSSTGSI). The span at 736 to 751 (GDTSPRHLSNVSSTGS) shows a compositional bias: polar residues. Thr738 bears the Phosphothreonine mark. Phosphoserine is present on residues Ser739, Ser744, Ser751, and Ser757. Thr762 is modified (phosphothreonine).

In terms of assembly, interacts with MARK1, MARK2, MARK3 and MARK4. Interacts with SQSTM1 when polyubiquitinated. Interacts with PSMC2 through SQSTM1. Interacts with FKBP4. Binds to CSNK1D. Interacts with SGK1. Interacts with EPM2A; the interaction dephosphorylates MAPT at Ser-396. Interacts with PIN1. Interacts with LRRK2. Interacts with LRP1, leading to endocytosis; this interaction is reduced in the presence of LRPAP1/RAP. In terms of processing, polyubiquitinated. Requires functional TRAF6 and may provoke SQSTM1-dependent degradation by the proteasome. Phosphorylation at various serine and threonine residues in S-P or T-P motifs by proline-directed protein kinases (PDPK1, CDK1, CDK5, GSK3, MAPK) (a few sites per protein in interphase, more in mitosis), and at serine residues in K-X-G-S motifs by MAP/microtubule affinity-regulating kinase (MARK1, MARK2, MARK3 or MARK4), causing detachment from microtubules, and their disassembly. Phosphorylation at Ser-597 by BRSK1 and BRSK2 in neurons affects ability to bind microtubules and plays a role in neuron polarization. Phosphorylated by PHK. Dephosphorylation at several serine and threonine residues by the serine/threonine phosphatase PPP5C.

The protein localises to the cytoplasm. It is found in the cytosol. It localises to the cell membrane. The protein resides in the cytoskeleton. Its subcellular location is the cell projection. The protein localises to the axon. It is found in the dendrite. In terms of biological role, promotes microtubule assembly and stability, and might be involved in the establishment and maintenance of neuronal polarity. The C-terminus binds axonal microtubules while the N-terminus binds neural plasma membrane components, suggesting that tau functions as a linker protein between both. Axonal polarity is predetermined by tau localization (in the neuronal cell) in the domain of the cell body defined by the centrosome. The short isoforms allow plasticity of the cytoskeleton whereas the longer isoforms may preferentially play a role in its stabilization. The polypeptide is Microtubule-associated protein tau (MAPT) (Hylobates lar (Lar gibbon)).